The chain runs to 962 residues: Integrator complex subunit 7 (962 aa).

Phosphoserine is present on residues S338 and S809.

The protein belongs to the Integrator subunit 7 family. In terms of assembly, component of the Integrator complex, composed of core subunits INTS1, INTS2, INTS3, INTS4, INTS5, INTS6, INTS7, INTS8, INTS9/RC74, INTS10, INTS11/CPSF3L, INTS12, INTS13, INTS14 and INTS15. The core complex associates with protein phosphatase 2A subunits PPP2CA and PPP2R1A, to form the Integrator-PP2A (INTAC) complex. Interacts with NABP2.

Its subcellular location is the nucleus. The protein localises to the chromosome. It is found in the cytoplasm. Its function is as follows. Component of the integrator complex, a multiprotein complex that terminates RNA polymerase II (Pol II) transcription in the promoter-proximal region of genes. The integrator complex provides a quality checkpoint during transcription elongation by driving premature transcription termination of transcripts that are unfavorably configured for transcriptional elongation: the complex terminates transcription by (1) catalyzing dephosphorylation of the C-terminal domain (CTD) of Pol II subunit POLR2A/RPB1 and SUPT5H/SPT5, (2) degrading the exiting nascent RNA transcript via endonuclease activity and (3) promoting the release of Pol II from bound DNA. The integrator complex is also involved in terminating the synthesis of non-coding Pol II transcripts, such as enhancer RNAs (eRNAs), small nuclear RNAs (snRNAs), telomerase RNAs and long non-coding RNAs (lncRNAs). May be not involved in the recruitment of cytoplasmic dynein to the nuclear envelope by different components of the INT complex. Plays a role in DNA damage response (DDR) signaling during the S phase. This Homo sapiens (Human) protein is Integrator complex subunit 7.